The sequence spans 295 residues: Glutamyl-Q tRNA(Asp) synthetase (295 aa).

L-glutamate-binding positions include 9–13 (RFAPT) and glutamate 45. Residues 12–22 (PTPSGYLHFGS) carry the 'HIGH' region motif. The Zn(2+) site is built by cysteine 101, cysteine 103, tyrosine 115, and cysteine 119. L-glutamate-binding residues include tyrosine 172 and arginine 190. The short motif at 228–232 (KLGKS) is the 'KMSKS' region element. Lysine 231 contacts ATP.

The protein belongs to the class-I aminoacyl-tRNA synthetase family. GluQ subfamily. Zn(2+) serves as cofactor.

Functionally, catalyzes the tRNA-independent activation of glutamate in presence of ATP and the subsequent transfer of glutamate onto a tRNA(Asp). Glutamate is transferred on the 2-amino-5-(4,5-dihydroxy-2-cyclopenten-1-yl) moiety of the queuosine in the wobble position of the QUC anticodon. The sequence is that of Glutamyl-Q tRNA(Asp) synthetase from Pseudomonas syringae pv. syringae (strain B728a).